A 128-amino-acid polypeptide reads, in one-letter code: Cytochrome c-type biogenesis protein CcmE (128 aa).

At 1 to 8 (MQKRVRNR) the chain is on the cytoplasmic side. A helical; Signal-anchor for type II membrane protein transmembrane segment spans residues 9-29 (LITIIICFCSACLGISIILYN). Residues 30-128 (LEKNIVFFLP…KHDENYRPPQ (99 aa)) lie on the Periplasmic side of the membrane. Heme-binding residues include His120 and Tyr124.

Belongs to the CcmE/CycJ family.

The protein localises to the cell inner membrane. Its function is as follows. Heme chaperone required for the biogenesis of c-type cytochromes. Transiently binds heme delivered by CcmC and transfers the heme to apo-cytochromes in a process facilitated by CcmF and CcmH. This Rickettsia peacockii (strain Rustic) protein is Cytochrome c-type biogenesis protein CcmE.